We begin with the raw amino-acid sequence, 385 residues long: MEESITGLITSFGFSSPEAFIALLVVVLAVIGAVIVVITFRPLMEYYPYTYPNARVRAKIGKILNEKQIAELAESESLEEVQNFLRGHKDYAKFVDKYPIEQALDANLAESYDLLARIAPGDLKPTFDLMLDQWDIKNIKSVLIAREAKLNEEETRELLVPYGELKDDQDKLIEADSVQDLIVALEGTPYAKILEEALPDYNENKTLLTLESALDNYYYERLLVKSSSQADDNTRMLHSYIGTKVDIANIKIILRAKADNLTYDQIKPYVIDNGYQLRGWKLKEFMESEDMNSLLSSIESSEYGSIVADHIPEYNSTKSITVFDEALDSYERNMAKNIFRKKPFGVGPIVGFMNKKEIEIKNLKIIARSKRGSSIPSSEIKEMLL.

The protein belongs to the V-ATPase V0D/AC39 subunit family. As to quaternary structure, has multiple subunits with at least A(3), B(3), C, D, E, F, H, I and proteolipid K(x).

The protein resides in the cell membrane. Component of the A-type ATP synthase that produces ATP from ADP in the presence of a proton gradient across the membrane. The sequence is that of A-type ATP synthase subunit C from Methanosphaera stadtmanae (strain ATCC 43021 / DSM 3091 / JCM 11832 / MCB-3).